Consider the following 99-residue polypeptide: DNA-binding protein HU (99 aa).

The tract at residues 67-86 (REGRNPKTGAKMKIDAYNQP) is disordered.

The protein belongs to the bacterial histone-like protein family. Homodimer.

Functionally, histone-like DNA-binding protein which is capable of wrapping DNA to stabilize it, and thus to prevent its denaturation under extreme environmental conditions. The protein is DNA-binding protein HU (hup) of Rickettsia conorii (strain ATCC VR-613 / Malish 7).